The chain runs to 238 residues: tRNA (guanine-N(7)-)-methyltransferase (238 aa).

Glu-68, Glu-93, Asp-120, and Asp-143 together coordinate S-adenosyl-L-methionine. Residue Asp-143 is part of the active site. Residues Lys-147, Asp-179, and 216–219 contribute to the substrate site; that span reads TKFE.

It belongs to the class I-like SAM-binding methyltransferase superfamily. TrmB family.

It catalyses the reaction guanosine(46) in tRNA + S-adenosyl-L-methionine = N(7)-methylguanosine(46) in tRNA + S-adenosyl-L-homocysteine. It participates in tRNA modification; N(7)-methylguanine-tRNA biosynthesis. Its function is as follows. Catalyzes the formation of N(7)-methylguanine at position 46 (m7G46) in tRNA. This is tRNA (guanine-N(7)-)-methyltransferase from Marinobacter nauticus (strain ATCC 700491 / DSM 11845 / VT8) (Marinobacter aquaeolei).